A 479-amino-acid polypeptide reads, in one-letter code: Proline--tRNA ligase 2 (479 aa).

The protein belongs to the class-II aminoacyl-tRNA synthetase family. ProS type 3 subfamily. As to quaternary structure, homodimer.

The protein localises to the cytoplasm. The enzyme catalyses tRNA(Pro) + L-proline + ATP = L-prolyl-tRNA(Pro) + AMP + diphosphate. Its function is as follows. Catalyzes the attachment of proline to tRNA(Pro) in a two-step reaction: proline is first activated by ATP to form Pro-AMP and then transferred to the acceptor end of tRNA(Pro). The sequence is that of Proline--tRNA ligase 2 from Rhodococcus jostii (strain RHA1).